The chain runs to 450 residues: Tubulin alpha-2 chain (450 aa).

Gln11, Glu71, Gly144, Thr145, Thr179, Asn206, and Asn228 together coordinate GTP. Mg(2+) is bound at residue Glu71. Glu254 is a catalytic residue. Residue Thr349 is modified to Phosphothreonine. The tract at residues 430–450 (KDYEEVGAEGGDDEDDEGEEY) is disordered. The span at 431 to 450 (DYEEVGAEGGDDEDDEGEEY) shows a compositional bias: acidic residues.

This sequence belongs to the tubulin family. Dimer of alpha and beta chains. A typical microtubule is a hollow water-filled tube with an outer diameter of 25 nm and an inner diameter of 15 nM. Alpha-beta heterodimers associate head-to-tail to form protofilaments running lengthwise along the microtubule wall with the beta-tubulin subunit facing the microtubule plus end conferring a structural polarity. Microtubules usually have 13 protofilaments but different protofilament numbers can be found in some organisms and specialized cells. Mg(2+) serves as cofactor. Post-translationally, undergoes a tyrosination/detyrosination cycle, the cyclic removal and re-addition of a C-terminal tyrosine residue by the enzymes tubulin tyrosine carboxypeptidase (TTCP) and tubulin tyrosine ligase (TTL), respectively. In terms of processing, acetylation of alpha chains at Lys-40 stabilizes microtubules and affects affinity and processivity of microtubule motors. This modification has a role in multiple cellular functions, ranging from cell motility, cell cycle progression or cell differentiation to intracellular trafficking and signaling.

The protein localises to the cytoplasm. It is found in the cytoskeleton. The enzyme catalyses GTP + H2O = GDP + phosphate + H(+). Tubulin is the major constituent of microtubules, a cylinder consisting of laterally associated linear protofilaments composed of alpha- and beta-tubulin heterodimers. Microtubules grow by the addition of GTP-tubulin dimers to the microtubule end, where a stabilizing cap forms. Below the cap, tubulin dimers are in GDP-bound state, owing to GTPase activity of alpha-tubulin. This is Tubulin alpha-2 chain (TUBA2) from Arabidopsis thaliana (Mouse-ear cress).